A 324-amino-acid chain; its full sequence is Probable UDP-sugar transporter protein SLC35A4 (324 aa).

At 1–18 (MSVEDGGVPGLARPRQAR) the chain is on the cytoplasmic side. Residues 19-39 (WTLLLFLSTAMYGAHAPFLAL) traverse the membrane as a helical segment. The Lumenal segment spans residues 40 to 52 (CHVDGRVPFRPSS). A helical membrane pass occupies residues 53–73 (AVLLTELTKLLLCAFSLLVGW). Residues 74-85 (QTWPQGTPPWRQ) are Cytoplasmic-facing. Residues 86 to 106 (AVPFALSALLYGANNNLVIYL) traverse the membrane as a helical segment. Residues 107-142 (QRYMDPSTYQVLSNLKIGSTALLYCLCLGHRLSARQ) lie on the Lumenal side of the membrane. A helical transmembrane segment spans residues 143–163 (GLALLLLMAAGACYASGGFQE). At 164-180 (PVNTLPGPASAAGAHPM) the chain is on the cytoplasmic side. The helical transmembrane segment at 181–201 (PLHITPLGLLLLILYCLISGL) threads the bilayer. Residues 202–214 (SSVYTELIMKRQR) are Lumenal-facing. Residues 215–235 (LPLALQNLFLYTFGVILNFGL) traverse the membrane as a helical segment. Residues 236-248 (YAGSGPGPGFLEG) are Cytoplasmic-facing. A helical membrane pass occupies residues 249 to 271 (FSGWAVLVVLNQAVNGLLMSAVM). Over 272 to 279 (KHGSSITR) the chain is Lumenal. The chain crosses the membrane as a helical span at residues 280–300 (LFIVSCSLVVNAVLSAVLLQL). The Cytoplasmic portion of the chain corresponds to 301-324 (QLTAIFFLAALLIGLAVCLYYGSP).

The protein belongs to the nucleotide-sugar transporter family. SLC35A subfamily. As to quaternary structure, found in a complex with SLC35A2 and SLC35A3.

The protein localises to the golgi apparatus membrane. The catalysed reaction is CDP-L-ribitol(in) + CDP(out) = CDP-L-ribitol(out) + CDP(in). Its function is as follows. Mediates the transport of CDP-ribitol. Does not exhibit CMP-sialic acid, UDP-galactose and UDP-N-acetylglucosamine transport activity. The chain is Probable UDP-sugar transporter protein SLC35A4 from Mus musculus (Mouse).